Here is a 680-residue protein sequence, read N- to C-terminus: Lipase 1 (680 aa).

Positions 1 to 34 are cleaved as a signal peptide; it reads MKSQNKYSIRKFSVGASSILIATLLFLSGGQAQA. Positions 35-290 are excised as a propeptide; the sequence is AEKQVNMGNS…AKAKDDQTNK (256 aa). The disordered stretch occupies residues 82–259; the sequence is KNLHNDKTIS…PTKDNDKKNG (178 aa). Positions 84–112 are enriched in basic and acidic residues; sequence LHNDKTISEENHRKTDDLNKDQLKDDKKS. Positions 125–138 are enriched in polar residues; that stretch reads KNNNANPSDVNQGL. The segment covering 148–170 has biased composition (low complexity); sequence SKVASQQQSKEADNSQDSNANNN. The segment covering 204 to 223 has biased composition (polar residues); sequence QPQQNNQANDKITNYNFNNE. Positions 224 to 234 are enriched in basic and acidic residues; sequence QEVKPQKDEKT. Polar residues predominate over residues 235–246; the sequence is LSVSDLKNNQKS. Ser-408 serves as the catalytic Nucleophile. Asp-600 (charge relay system) is an active-site residue. Asp-638 serves as a coordination point for Ca(2+). The active-site Charge relay system is the His-639. Positions 641, 646, and 649 each coordinate Ca(2+).

The protein belongs to the AB hydrolase superfamily. Lipase family.

The protein localises to the secreted. The catalysed reaction is a triacylglycerol + H2O = a diacylglycerol + a fatty acid + H(+). This chain is Lipase 1 (lip1), found in Staphylococcus aureus (strain MSSA476).